We begin with the raw amino-acid sequence, 2073 residues long: Non-reducing polyketide synthase cla3 (2073 aa).

The segment at 9–242 is N-terminal acylcarrier protein transacylase domain (SAT); the sequence is LLFGDYTEPW…EKLNIHALQH (234 aa). Residues 363 to 793 enclose the Ketosynthase family 3 (KS3) domain; it reads SGRIAIVGMS…GGNGCLLLEE (431 aa). Catalysis depends on for beta-ketoacyl synthase activity residues C538, H673, and H712. Positions 898–1198 are malonyl-CoA:ACP transacylase (MAT) domain; sequence TFTGQGSQYA…KIMSTLDATG (301 aa). S987 acts as the For acyl/malonyl transferase activity in catalysis. Positions 1276–1590 are product template (PT) domain; the sequence is STCAQYVITE…QNVILERLLG (315 aa). The segment at 1279-1420 is N-terminal hotdog fold; the sequence is AQYVITETKT…AGLESQWEKS (142 aa). The PKS/mFAS DH domain occupies 1279–1586; sequence AQYVITETKT…FHRVQNVILE (308 aa). The Proton acceptor; for dehydratase activity role is filled by H1311. Positions 1439 to 1586 are C-terminal hotdog fold; the sequence is QGHRIQRDIY…FHRVQNVILE (148 aa). The active-site Proton donor; for dehydratase activity is D1500. The segment at 1594–1637 is disordered; sequence SSSVPAQASDPLRSKRSPQEARSLPGEAKTEKPGSTIATTSPVL. A Carrier domain is found at 1641-1718; it reads KSEQGMFQAL…NLRCAFDEDV (78 aa). S1678 is modified (O-(pantetheine 4'-phosphoryl)serine). Over residues 1721–1738 the composition is skewed to polar residues; it reads EFTDSEVTSGTPNSSESV. The tract at residues 1721–1786 is disordered; sequence EFTDSEVTSG…GVLDDGSPQP (66 aa). The segment covering 1747–1774 has biased composition (basic and acidic residues); sequence PEEHAFKEPKDDSPLARRDMDNSNDRSL. The thioesterase (TE) domain stretch occupies residues 1805-1950; that stretch reads FLIADGSGSI…MQQHLRAIFK (146 aa). The active-site For thioesterase activity is the H2058.

It participates in secondary metabolite biosynthesis. Functionally, highly reducing polyketide synthase; part of the gene cluster that mediates the biosynthesis of cladosporin, a tricyclic octaketide that acts as an antimalarial agent though inhibition of the Plasmodium falciparum lysyl-tRNA synthetase. The highly reducing polyketide synthase cla2 is responsible for biosynthesis up to the pentaketide stage, including of the tetrahydropyran (THP) ring, whereas the three subsequent ketide extensions with no reduction are catalyzed by the non-reducing polyketide synthase cla3. This chain is Non-reducing polyketide synthase cla3, found in Cladosporium cladosporioides.